Consider the following 494-residue polypeptide: 4-trimethylaminobutyraldehyde dehydrogenase (494 aa).

Ser-2 is modified (N-acetylserine). Lys-30 carries the N6-acetyllysine; alternate modification. N6-succinyllysine; alternate is present on Lys-30. Lys-59 carries the post-translational modification N6-succinyllysine. NAD(+)-binding positions include Lys-180 and 232–236 (GSVPT). Glu-254 functions as the Proton acceptor in the catalytic mechanism. The Nucleophile role is filled by Cys-288. Residue Lys-298 is modified to N6-acetyllysine. Lys-303 carries the post-translational modification N6-acetyllysine; alternate. Residue Lys-303 is modified to N6-succinyllysine; alternate. N6-acetyllysine is present on Lys-344. Glu-391 is a binding site for NAD(+).

It belongs to the aldehyde dehydrogenase family. In terms of assembly, homotetramer.

It localises to the cytoplasm. The protein resides in the cytosol. The enzyme catalyses 4-(trimethylamino)butanal + NAD(+) + H2O = 4-(trimethylamino)butanoate + NADH + 2 H(+). The catalysed reaction is an aldehyde + NAD(+) + H2O = a carboxylate + NADH + 2 H(+). It carries out the reaction 4-aminobutanal + NAD(+) + H2O = 4-aminobutanoate + NADH + 2 H(+). It catalyses the reaction formaldehyde + NAD(+) + H2O = formate + NADH + 2 H(+). The enzyme catalyses acetaldehyde + NAD(+) + H2O = acetate + NADH + 2 H(+). The catalysed reaction is imidazole-4-acetaldehyde + NAD(+) + H2O = imidazole-4-acetate + NADH + 2 H(+). It carries out the reaction acrolein + NAD(+) + H2O = acrylate + NADH + 2 H(+). It catalyses the reaction (5-hydroxyindol-3-yl)acetaldehyde + NAD(+) + H2O = (5-hydroxyindol-3-yl)acetate + NADH + 2 H(+). The enzyme catalyses 3,4-dihydroxyphenylacetaldehyde + NAD(+) + H2O = 3,4-dihydroxyphenylacetate + NADH + 2 H(+). The catalysed reaction is spermine monoaldehyde + NAD(+) + H2O = N-(2-carboxyethyl)spermidine + NADH + 2 H(+). It carries out the reaction propanal + NAD(+) + H2O = propanoate + NADH + 2 H(+). It catalyses the reaction butanal + NAD(+) + H2O = butanoate + NADH + 2 H(+). The enzyme catalyses pentanal + NAD(+) + H2O = pentanoate + NADH + 2 H(+). The catalysed reaction is hexanal + NAD(+) + H2O = hexanoate + NADH + 2 H(+). Its pathway is amine and polyamine biosynthesis; carnitine biosynthesis. In terms of biological role, converts gamma-trimethylaminobutyraldehyde into gamma-butyrobetaine with high efficiency (in vitro). Can catalyze the irreversible oxidation of a broad range of aldehydes to the corresponding acids in an NAD-dependent reaction, but with low efficiency. Catalyzes the oxidation of aldehydes arising from biogenic amines and polyamines. This chain is 4-trimethylaminobutyraldehyde dehydrogenase (ALDH9A1), found in Pongo abelii (Sumatran orangutan).